We begin with the raw amino-acid sequence, 660 residues long: T-box protein H15 (660 aa).

Positions 1 to 11 (MLLSNQPANTK) are enriched in polar residues. 3 disordered regions span residues 1–72 (MLLS…NHNQ), 90–122 (GGNA…DDVD), and 169–266 (QQQQ…PKIV). Over residues 12 to 22 (PQQTPSPSQTQ) the composition is skewed to low complexity. The span at 23–33 (NFKSKLQQQIV) shows a compositional bias: polar residues. Over residues 35 to 47 (AAAAAAANIANGS) the composition is skewed to low complexity. The segment covering 48–71 (SHHHHHQNHHHHHPLNNHHNHNHN) has biased composition (basic residues). Composition is skewed to low complexity over residues 93–108 (APSS…SPAS) and 169–179 (QQQQQQQQQRQ). Over residues 180-198 (QTHHHATTGKQQRQHHNHH) the composition is skewed to basic residues. A compositionally biased stretch (low complexity) spans 199 to 233 (SSNTNNSSNSGNSNTNSKSSSQRGRSAAAVGAAAT). Residues 234–243 (PSPPPPPPSQ) are compositionally biased toward pro residues. The segment at residues 286–472 (LWDKFHELGT…SNPFAKGFRD (187 aa)) is a DNA-binding region (T-box). Residues 598–660 (NRTPPPSMAV…PPASNRAESP (63 aa)) are disordered. The segment covering 600–613 (TPPPSMAVAPPAPA) has biased composition (pro residues). Residues 614 to 624 (TPTSSCGSASP) are compositionally biased toward low complexity. The segment covering 643–660 (QVPQHQASPPASNRAESP) has biased composition (polar residues).

The protein localises to the nucleus. The chain is T-box protein H15 (H15) from Drosophila melanogaster (Fruit fly).